The primary structure comprises 124 residues: Large ribosomal subunit protein bL17 (124 aa).

This sequence belongs to the bacterial ribosomal protein bL17 family. In terms of assembly, part of the 50S ribosomal subunit. Contacts protein L32.

This is Large ribosomal subunit protein bL17 from Mycoplasma pneumoniae (strain ATCC 29342 / M129 / Subtype 1) (Mycoplasmoides pneumoniae).